A 667-amino-acid chain; its full sequence is 1-deoxy-D-xylulose-5-phosphate synthase (667 aa).

Thiamine diphosphate is bound by residues His73 and 113–115 (SHA). Asp145 lines the Mg(2+) pocket. Residues 146 to 147 (GA), Asn175, Tyr297, and Glu379 contribute to the thiamine diphosphate site. Asn175 lines the Mg(2+) pocket.

The protein belongs to the transketolase family. DXPS subfamily. Homodimer. Mg(2+) serves as cofactor. The cofactor is thiamine diphosphate.

The enzyme catalyses D-glyceraldehyde 3-phosphate + pyruvate + H(+) = 1-deoxy-D-xylulose 5-phosphate + CO2. Its pathway is metabolic intermediate biosynthesis; 1-deoxy-D-xylulose 5-phosphate biosynthesis; 1-deoxy-D-xylulose 5-phosphate from D-glyceraldehyde 3-phosphate and pyruvate: step 1/1. Catalyzes the acyloin condensation reaction between C atoms 2 and 3 of pyruvate and glyceraldehyde 3-phosphate to yield 1-deoxy-D-xylulose-5-phosphate (DXP). The sequence is that of 1-deoxy-D-xylulose-5-phosphate synthase from Kocuria rhizophila (strain ATCC 9341 / DSM 348 / NBRC 103217 / DC2201).